The primary structure comprises 438 residues: 23S rRNA (uracil(1939)-C(5))-methyltransferase RlmD (438 aa).

Positions 10–68 constitute a TRAM domain; that stretch reads KTKNVQTITADILDLDYQGLGVAKINGKTWFIENALPHEKVECRILEDKRQYGHAIVKK. [4Fe-4S] cluster contacts are provided by cysteine 81, cysteine 87, cysteine 90, and cysteine 168. Residues glutamine 271, phenylalanine 300, asparagine 305, glutamate 321, aspartate 348, and aspartate 369 each contribute to the S-adenosyl-L-methionine site. Residue cysteine 395 is the Nucleophile of the active site.

The protein belongs to the class I-like SAM-binding methyltransferase superfamily. RNA M5U methyltransferase family. RlmD subfamily.

It catalyses the reaction uridine(1939) in 23S rRNA + S-adenosyl-L-methionine = 5-methyluridine(1939) in 23S rRNA + S-adenosyl-L-homocysteine + H(+). Catalyzes the formation of 5-methyl-uridine at position 1939 (m5U1939) in 23S rRNA. The polypeptide is 23S rRNA (uracil(1939)-C(5))-methyltransferase RlmD (Haemophilus influenzae (strain ATCC 51907 / DSM 11121 / KW20 / Rd)).